The chain runs to 214 residues: Probable transaldolase (214 aa).

Catalysis depends on Lys-83, which acts as the Schiff-base intermediate with substrate.

Belongs to the transaldolase family. Type 3B subfamily.

The protein resides in the cytoplasm. The catalysed reaction is D-sedoheptulose 7-phosphate + D-glyceraldehyde 3-phosphate = D-erythrose 4-phosphate + beta-D-fructose 6-phosphate. The protein operates within carbohydrate degradation; pentose phosphate pathway; D-glyceraldehyde 3-phosphate and beta-D-fructose 6-phosphate from D-ribose 5-phosphate and D-xylulose 5-phosphate (non-oxidative stage): step 2/3. In terms of biological role, transaldolase is important for the balance of metabolites in the pentose-phosphate pathway. In Carboxydothermus hydrogenoformans (strain ATCC BAA-161 / DSM 6008 / Z-2901), this protein is Probable transaldolase.